Reading from the N-terminus, the 364-residue chain is DNA replication and repair protein RecF (364 aa).

30 to 37 (GENGSGKT) lines the ATP pocket.

It belongs to the RecF family.

It is found in the cytoplasm. Its function is as follows. The RecF protein is involved in DNA metabolism; it is required for DNA replication and normal SOS inducibility. RecF binds preferentially to single-stranded, linear DNA. It also seems to bind ATP. This is DNA replication and repair protein RecF from Xylella fastidiosa (strain M23).